The chain runs to 114 residues: Protein LLP homolog (114 aa).

2 stretches are compositionally biased toward basic residues: residues 1–21 and 91–108; these read MAKSLRSKWKRKMRAEKRKKN and QRKKLKAQRLKGKKKSKL. Disordered regions lie at residues 1-23 and 91-114; these read MAKSLRSKWKRKMRAEKRKKNAP and QRKKLKAQRLKGKKKSKLPKGLAW.

Belongs to the learning-associated protein family.

The protein resides in the nucleus. Its subcellular location is the nucleolus. The protein localises to the chromosome. Regulates dendritic and spine growth and synaptic transmission. This Gallus gallus (Chicken) protein is Protein LLP homolog (LLPH).